The sequence spans 204 residues: Imidazole glycerol phosphate synthase subunit HisH 1 (204 aa).

Residues 5-204 (KVVIIDTGCA…AKLIQNFLEL (200 aa)) enclose the Glutamine amidotransferase type-1 domain. Cysteine 80 (nucleophile) is an active-site residue. Catalysis depends on residues histidine 186 and glutamate 188.

Heterodimer of HisH and HisF.

The protein resides in the cytoplasm. It catalyses the reaction 5-[(5-phospho-1-deoxy-D-ribulos-1-ylimino)methylamino]-1-(5-phospho-beta-D-ribosyl)imidazole-4-carboxamide + L-glutamine = D-erythro-1-(imidazol-4-yl)glycerol 3-phosphate + 5-amino-1-(5-phospho-beta-D-ribosyl)imidazole-4-carboxamide + L-glutamate + H(+). The catalysed reaction is L-glutamine + H2O = L-glutamate + NH4(+). Its pathway is amino-acid biosynthesis; L-histidine biosynthesis; L-histidine from 5-phospho-alpha-D-ribose 1-diphosphate: step 5/9. In terms of biological role, IGPS catalyzes the conversion of PRFAR and glutamine to IGP, AICAR and glutamate. The HisH subunit provides the glutamine amidotransferase activity that produces the ammonia necessary to HisF for the synthesis of IGP and AICAR. In Vibrio vulnificus (strain YJ016), this protein is Imidazole glycerol phosphate synthase subunit HisH 1 (hisH1).